The chain runs to 445 residues: Proline--tRNA ligase (445 aa).

This sequence belongs to the class-II aminoacyl-tRNA synthetase family. ProS type 2 subfamily. As to quaternary structure, homodimer.

It is found in the cytoplasm. The catalysed reaction is tRNA(Pro) + L-proline + ATP = L-prolyl-tRNA(Pro) + AMP + diphosphate. In terms of biological role, catalyzes the attachment of proline to tRNA(Pro) in a two-step reaction: proline is first activated by ATP to form Pro-AMP and then transferred to the acceptor end of tRNA(Pro). This chain is Proline--tRNA ligase, found in Cereibacter sphaeroides (strain ATCC 17029 / ATH 2.4.9) (Rhodobacter sphaeroides).